Consider the following 337-residue polypeptide: NADH-quinone oxidoreductase subunit H (337 aa).

Helical transmembrane passes span 9–29 (FAKIWAVLIPLFLAVAYFTYV), 77–97 (FLIAPAMAIMPALAAWAVIPF), 110–130 (LLYILAMTSLGVYGLIIAGWA), 154–174 (MGFALVGVLIAAGTMNLSGIV), 181–201 (FWEWFWLPLLPLFLIYWISGV), 229–249 (MAFAVFFLAEYANMLLISFLA), 274–294 (VPGIVWLFAKAAFFAFCYLWF), and 313–333 (VLIPGTVVWLVVLTGLVYGGV).

The protein belongs to the complex I subunit 1 family. NDH-1 is composed of 14 different subunits. Subunits NuoA, H, J, K, L, M, N constitute the membrane sector of the complex.

It localises to the cell inner membrane. It catalyses the reaction a quinone + NADH + 5 H(+)(in) = a quinol + NAD(+) + 4 H(+)(out). Functionally, NDH-1 shuttles electrons from NADH, via FMN and iron-sulfur (Fe-S) centers, to quinones in the respiratory chain. The immediate electron acceptor for the enzyme in this species is believed to be ubiquinone. Couples the redox reaction to proton translocation (for every two electrons transferred, four hydrogen ions are translocated across the cytoplasmic membrane), and thus conserves the redox energy in a proton gradient. This subunit may bind ubiquinone. The sequence is that of NADH-quinone oxidoreductase subunit H from Halorhodospira halophila (strain DSM 244 / SL1) (Ectothiorhodospira halophila (strain DSM 244 / SL1)).